Reading from the N-terminus, the 373-residue chain is Alanine racemase (373 aa).

Lys-40 (proton acceptor; specific for D-alanine) is an active-site residue. Position 40 is an N6-(pyridoxal phosphate)lysine (Lys-40). Residue Arg-140 coordinates substrate. The active-site Proton acceptor; specific for L-alanine is the Tyr-268. Met-315 serves as a coordination point for substrate.

Belongs to the alanine racemase family. It depends on pyridoxal 5'-phosphate as a cofactor.

It carries out the reaction L-alanine = D-alanine. The protein operates within amino-acid biosynthesis; D-alanine biosynthesis; D-alanine from L-alanine: step 1/1. Its function is as follows. Catalyzes the interconversion of L-alanine and D-alanine. May also act on other amino acids. This Levilactobacillus brevis (strain ATCC 367 / BCRC 12310 / CIP 105137 / JCM 1170 / LMG 11437 / NCIMB 947 / NCTC 947) (Lactobacillus brevis) protein is Alanine racemase (alr).